A 166-amino-acid chain; its full sequence is Specificity protein transcription factor 2 (166 aa).

The segment at 17 to 45 (SYHHSLPSISPPDSPASTSASSSSSSIGA) is disordered. A compositionally biased stretch (low complexity) spans 31–42 (PASTSASSSSSS). 3 consecutive C2H2-type zinc fingers follow at residues 77-101 (HLCS…LRKH), 107-131 (FVCD…KRTH), and 137-160 (FACK…TSVH).

The protein belongs to the Sp1 C2H2-type zinc-finger protein family.

Its function is as follows. Transcription factor. Probably acts downstream of the Wnt signaling pathway. The sequence is that of Specificity protein transcription factor 2 from Caenorhabditis elegans.